Here is a 1080-residue protein sequence, read N- to C-terminus: MPKRTDLRTILIIGAGPIVIGQACEFDYSGAQACKALRAEGFRVVLVNSNPATIMTDPDMADAVYIEPIHWRTVEKIITKEKPDALLPTMGGQTALNCALDLADHGVLEKYGVELIGAKREAIRMAEDRELFRVAMQEIGLECPKAEVAKSLERALEIQAKVGFPTIIRPSFTLGGTGGGIAYNRQEFEEIIKRGLELSPVHEVLVEESVLGWKEFEMEVVRDASDNCIIVCSIENLDPMGVHTGDSITVAPAQTLSDKEYQRLRDASIAVLRKIGVDTGGSNVQFGIDPQTGRVVVIEMNPRVSRSSALASKATGFPIAKIAAKLAVGYTLDELKNEITGGKTPASFEPSIDYVVTKIPRFAFEKFPQADARLTTQMKSVGEVMAMGRTFAESLQKAVRGLETGKVGLEPTGLDLSSEDDLVVLKRELKAPGAERLFYVADAFRAGFAVADVYALSYIDPWFLDQIEEIVAAEGRLVTDGLGSIDGARLRQLKRIGFSDARIAQLTGTNEVAVRTLRRVLKVKPVYKRVDSCAGEFATGTAYLYSTYEEECEAAPSDRRKIMILGGGPNRIGQGIEFDYCCVHAALALREDGFETIMVNCNPETVSTDYDTSDRLYFEPLTLEDVLEIVEVEHPVGVIVQYGGQTPLKLAKALEANGVPVIGTSPESIDLAEDRERFQRLVQQLGLRQPPNCTARTADEALVLAREIGYPLVVRPSYVLGGRAMEIVYSEADLARYVRDAVKVSNDSPVLLDRFLDNAVEVDVDIIADPEGQVLIGGVMEHIEEAGVHSGDSSCSLPPYSLSAATQDDLRRQVIRLAQALNVIGLMNTQFAIQSNDDGSDIVYLLEVNPRASRTVPFVSKATGVPLAKIAARCMTGKTLAEQSVTCEVVPAYYAVKEAIFPFAKLQGVDPILGPEMRSTGEVMGVGRSFAAAFARAQEAGDIRAPQPGRAFVSVRDPDKKRVLPVVLALVERGFGVVATAGTYAWLQQNGVACEVVNKVAEGRPHIVDLIKNGEIVYIINTTEGRAAIADSFSIRREALQHCVTYSTTIAGAKALVNSLEFRGTGPVWSLQELHKELQV.

Positions 1–403 are carboxyphosphate synthetic domain; it reads MPKRTDLRTI…SLQKAVRGLE (403 aa). ATP-binding residues include R129, R169, G175, G176, E208, V210, E215, G241, V242, H243, Q285, and E299. Residues 133–328 enclose the ATP-grasp 1 domain; it reads RVAMQEIGLE…IAKIAAKLAV (196 aa). 3 residues coordinate Mg(2+): Q285, E299, and N301. Mn(2+) contacts are provided by Q285, E299, and N301. The tract at residues 404 to 554 is oligomerization domain; the sequence is TGKVGLEPTG…YSTYEEECEA (151 aa). The segment at 555–942 is carbamoyl phosphate synthetic domain; it reads APSDRRKIMI…AFARAQEAGD (388 aa). Residues 679 to 876 enclose the ATP-grasp 2 domain; that stretch reads QRLVQQLGLR…LAKIAARCMT (198 aa). Residues R715, R754, L756, E761, G787, V788, H789, S790, Q830, and E847 each coordinate ATP. Residues Q830, E847, and N849 each contribute to the Mg(2+) site. Residues Q830, E847, and N849 each contribute to the Mn(2+) site. The 138-residue stretch at 943–1080 folds into the MGS-like domain; the sequence is IRAPQPGRAF…LQELHKELQV (138 aa). The tract at residues 943 to 1080 is allosteric domain; it reads IRAPQPGRAF…LQELHKELQV (138 aa).

The protein belongs to the CarB family. Composed of two chains; the small (or glutamine) chain promotes the hydrolysis of glutamine to ammonia, which is used by the large (or ammonia) chain to synthesize carbamoyl phosphate. Tetramer of heterodimers (alpha,beta)4. Mg(2+) serves as cofactor. Mn(2+) is required as a cofactor.

It catalyses the reaction hydrogencarbonate + L-glutamine + 2 ATP + H2O = carbamoyl phosphate + L-glutamate + 2 ADP + phosphate + 2 H(+). It carries out the reaction hydrogencarbonate + NH4(+) + 2 ATP = carbamoyl phosphate + 2 ADP + phosphate + 2 H(+). The protein operates within amino-acid biosynthesis; L-arginine biosynthesis; carbamoyl phosphate from bicarbonate: step 1/1. It functions in the pathway pyrimidine metabolism; UMP biosynthesis via de novo pathway; (S)-dihydroorotate from bicarbonate: step 1/3. Its function is as follows. Large subunit of the glutamine-dependent carbamoyl phosphate synthetase (CPSase). CPSase catalyzes the formation of carbamoyl phosphate from the ammonia moiety of glutamine, carbonate, and phosphate donated by ATP, constituting the first step of 2 biosynthetic pathways, one leading to arginine and/or urea and the other to pyrimidine nucleotides. The large subunit (synthetase) binds the substrates ammonia (free or transferred from glutamine from the small subunit), hydrogencarbonate and ATP and carries out an ATP-coupled ligase reaction, activating hydrogencarbonate by forming carboxy phosphate which reacts with ammonia to form carbamoyl phosphate. This is Carbamoyl phosphate synthase large chain from Xylella fastidiosa (strain Temecula1 / ATCC 700964).